A 338-amino-acid polypeptide reads, in one-letter code: Egl nine homolog 1 (338 aa).

Positions 1-11 are enriched in low complexity; that stretch reads PRAQPAPAQPR. Residues 1-99 are disordered; the sequence is PRAQPAPAQP…PSGGLRPNGQ (99 aa). S52 is subject to Phosphoserine. An S-nitrosocysteine mark is found at C116 and C123. The tract at residues 156-166 is beta(2)beta(3) 'finger-like' loop; the sequence is VSQKSDSSKDI. The region spanning 209–307 is the Fe2OG dioxygenase domain; sequence GRTKAMVACY…RYAITVWYFD (99 aa). An S-nitrosocysteine modification is found at C217. Fe cation contacts are provided by H228 and D230. C238 and C241 each carry S-nitrosocysteine. Fe cation is bound at residue H289. R298 is a 2-oxoglutarate binding site.

Monomer. Interacts with ING4; the interaction inhibits the hydroxylation of HIF alpha proteins. Interacts with PTGES3 (via PXLE motif); thereby recruiting EGLN1 to the HSP90 pathway to facilitate HIF alpha proteins hydroxylation. Interacts with LIMD1. Found in a complex composed of LIMD1, VHL, EGLN1/PHD2, ELOB and CUL2. Interacts with EPAS1. Interacts with CBFA2T3 and HIF1A. It depends on Fe(2+) as a cofactor. The cofactor is L-ascorbate. S-nitrosylation inhibits the enzyme activity up to 60% under aerobic conditions. Chelation of Fe(2+) has no effect on the S-nitrosylation. It is uncertain whether nitrosylation occurs on Cys-238 or Cys-241. In terms of tissue distribution, expressed in heart, liver, kidney, brain, liver and testis. Highest levels in heart, lowest in liver.

It localises to the cytoplasm. It is found in the nucleus. It carries out the reaction L-prolyl-[hypoxia-inducible factor alpha subunit] + 2-oxoglutarate + O2 = trans-4-hydroxy-L-prolyl-[hypoxia-inducible factor alpha subunit] + succinate + CO2. Its activity is regulated as follows. Increased activation in hypoxia. Hydroxylation of the C-terminal ODD domain (CODD) proline of HIF1A is activated by cyclosporin A (CsA). Functionally, cellular oxygen sensor that catalyzes, under normoxic conditions, the post-translational formation of 4-hydroxyproline in hypoxia-inducible factor (HIF) alpha proteins. Hydroxylates a specific proline found in each of the oxygen-dependent degradation (ODD) domains (N-terminal, NODD, and C-terminal, CODD) of HIF1A. Also hydroxylates HIF2A. Has a preference for the CODD site for both HIF1A and HIF1B. Hydroxylated HIFs are then targeted for proteasomal degradation via the von Hippel-Lindau ubiquitination complex. Under hypoxic conditions, the hydroxylation reaction is attenuated allowing HIFs to escape degradation resulting in their translocation to the nucleus, heterodimerization with HIF1B, and increased expression of hypoxy-inducible genes. EGLN1 is the most important isozyme under normoxia and, through regulating the stability of HIF1, involved in various hypoxia-influenced processes such as angiogenesis in retinal and cardiac functionality. Target proteins are preferentially recognized via a LXXLAP motif. This chain is Egl nine homolog 1 (Egln1), found in Rattus norvegicus (Rat).